Here is a 622-residue protein sequence, read N- to C-terminus: Low affinity potassium transport system protein Kup (622 aa).

Helical transmembrane passes span 9–29 (LPAITLAAIGVVYGDIGTSPL), 49–69 (VFGFLSLIFWLLIFVVSIKYL), 103–123 (VIMGLIGGSFFYGEVVITPAI), 137–157 (PQLDTWIVPLSIIVLTLLFMI), 165–185 (VGQLFAPIMLTWFLILAGLGL), 213–233 (VSFIALGAVVLSITGVEALYA), 247–267 (WFTVVLPSLTLNYFGQGALLL), 276–296 (PFFLLAPDWALIPLLIIAALA), 337–357 (IYIPFVNWMLYVAVVIVIVSF), 363–383 (LAAAYGIAVTGTMVLTSILST), 396–416 (FVALILIAFLCVDIPLFTANL), and 419–439 (LLSGGWLPLSLGTVMFIVMTT).

This sequence belongs to the HAK/KUP transporter (TC 2.A.72) family.

The protein resides in the cell inner membrane. It carries out the reaction K(+)(in) + H(+)(in) = K(+)(out) + H(+)(out). In terms of biological role, responsible for the low-affinity transport of potassium into the cell. Likely operates as a K(+):H(+) symporter. The polypeptide is Low affinity potassium transport system protein Kup (Escherichia coli O6:K15:H31 (strain 536 / UPEC)).